We begin with the raw amino-acid sequence, 920 residues long: DNA ligase (920 aa).

NAD(+) is bound by residues 90–94, 139–140, and Glu173; these read DAAYD and SL. Lys175 functions as the N6-AMP-lysine intermediate in the catalytic mechanism. NAD(+) contacts are provided by Arg196, Glu235, Lys360, and Lys384. Zn(2+) is bound by residues Cys481, Cys484, Cys500, and Cys506. A disordered region spans residues 659–691; that stretch reads RAQGEAAIESAETQGDTASETTGAPTGAEAPLG. A compositionally biased stretch (polar residues) spans 669–682; that stretch reads AETQGDTASETTGA. The 82-residue stretch at 839–920 folds into the BRCT domain; it reads SLPQTLAGKT…FAQLLATGTI (82 aa).

This sequence belongs to the NAD-dependent DNA ligase family. LigA subfamily. The cofactor is Mg(2+). Requires Mn(2+) as cofactor.

It catalyses the reaction NAD(+) + (deoxyribonucleotide)n-3'-hydroxyl + 5'-phospho-(deoxyribonucleotide)m = (deoxyribonucleotide)n+m + AMP + beta-nicotinamide D-nucleotide.. In terms of biological role, DNA ligase that catalyzes the formation of phosphodiester linkages between 5'-phosphoryl and 3'-hydroxyl groups in double-stranded DNA using NAD as a coenzyme and as the energy source for the reaction. It is essential for DNA replication and repair of damaged DNA. The polypeptide is DNA ligase (Bifidobacterium longum (strain NCC 2705)).